The primary structure comprises 231 residues: Enolase-phosphatase E1 (231 aa).

Belongs to the HAD-like hydrolase superfamily. MasA/MtnC family. As to quaternary structure, monomer. Mg(2+) serves as cofactor.

The enzyme catalyses 5-methylsulfanyl-2,3-dioxopentyl phosphate + H2O = 1,2-dihydroxy-5-(methylsulfanyl)pent-1-en-3-one + phosphate. Its pathway is amino-acid biosynthesis; L-methionine biosynthesis via salvage pathway; L-methionine from S-methyl-5-thio-alpha-D-ribose 1-phosphate: step 3/6. The protein operates within amino-acid biosynthesis; L-methionine biosynthesis via salvage pathway; L-methionine from S-methyl-5-thio-alpha-D-ribose 1-phosphate: step 4/6. Bifunctional enzyme that catalyzes the enolization of 2,3-diketo-5-methylthiopentyl-1-phosphate (DK-MTP-1-P) into the intermediate 2-hydroxy-3-keto-5-methylthiopentenyl-1-phosphate (HK-MTPenyl-1-P), which is then dephosphorylated to form the acireductone 1,2-dihydroxy-3-keto-5-methylthiopentene (DHK-MTPene). The sequence is that of Enolase-phosphatase E1 from Granulibacter bethesdensis (strain ATCC BAA-1260 / CGDNIH1).